Consider the following 252-residue polypeptide: Aspartate/glutamate leucyltransferase (252 aa).

The protein belongs to the R-transferase family. Bpt subfamily.

Its subcellular location is the cytoplasm. It catalyses the reaction N-terminal L-glutamyl-[protein] + L-leucyl-tRNA(Leu) = N-terminal L-leucyl-L-glutamyl-[protein] + tRNA(Leu) + H(+). It carries out the reaction N-terminal L-aspartyl-[protein] + L-leucyl-tRNA(Leu) = N-terminal L-leucyl-L-aspartyl-[protein] + tRNA(Leu) + H(+). Functionally, functions in the N-end rule pathway of protein degradation where it conjugates Leu from its aminoacyl-tRNA to the N-termini of proteins containing an N-terminal aspartate or glutamate. This chain is Aspartate/glutamate leucyltransferase, found in Polynucleobacter necessarius subsp. necessarius (strain STIR1).